We begin with the raw amino-acid sequence, 423 residues long: Gamma-glutamyl phosphate reductase (423 aa).

Belongs to the gamma-glutamyl phosphate reductase family.

The protein resides in the cytoplasm. The enzyme catalyses L-glutamate 5-semialdehyde + phosphate + NADP(+) = L-glutamyl 5-phosphate + NADPH + H(+). Its pathway is amino-acid biosynthesis; L-proline biosynthesis; L-glutamate 5-semialdehyde from L-glutamate: step 2/2. In terms of biological role, catalyzes the NADPH-dependent reduction of L-glutamate 5-phosphate into L-glutamate 5-semialdehyde and phosphate. The product spontaneously undergoes cyclization to form 1-pyrroline-5-carboxylate. This Burkholderia ambifaria (strain MC40-6) protein is Gamma-glutamyl phosphate reductase.